Here is a 1009-residue protein sequence, read N- to C-terminus: C2 domain-containing protein aex-1 (1009 aa).

In terms of domain architecture, C2 spans 812–945 (NAPHVDVHIS…ASEEKPTQRL (134 aa)).

It belongs to the unc-13 family. Expressed in intestine, body wall muscles and some amphid neurons.

Involved in retrograde signaling from post-synaptic cells to pre-synaptic neurons, probably by regulating vesicle exocytosis in post-synaptic cells. Acts in muscles, to regulate the localization of synaptic vesicle fusion protein unc-13 likely during vesicle exocytosis and thus regulate retrograde signaling at the neuromuscular junction (NMJ). Regulates anterior body muscle contractions (aBOC) and the expulsion steps during the defecation motor program (DMP). Probably by regulating DMP, plays a homeostatic role in the uptake of triglycerides. Regulates locomotion. The chain is C2 domain-containing protein aex-1 from Caenorhabditis elegans.